Consider the following 124-residue polypeptide: Glycine cleavage system H protein (124 aa).

The Lipoyl-binding domain occupies 22 to 104 (LVITGITDHA…YGKGWIYKIK (83 aa)). Position 63 is an N6-lipoyllysine (K63).

It belongs to the GcvH family. In terms of assembly, the glycine cleavage system is composed of four proteins: P, T, L and H. (R)-lipoate is required as a cofactor.

The glycine cleavage system catalyzes the degradation of glycine. The H protein shuttles the methylamine group of glycine from the P protein to the T protein. In Acinetobacter baumannii (strain ACICU), this protein is Glycine cleavage system H protein.